We begin with the raw amino-acid sequence, 581 residues long: NADH-quinone oxidoreductase subunit C/D (581 aa).

An NADH dehydrogenase I subunit C region spans residues 1–172; it reads MSASELVTEL…PLFNMTASLF (172 aa). The segment at 196–581 is NADH dehydrogenase I subunit D; the sequence is ELMILNYGPH…IDYVMSDVDR (386 aa).

In the N-terminal section; belongs to the complex I 30 kDa subunit family. The protein in the C-terminal section; belongs to the complex I 49 kDa subunit family. NDH-1 is composed of 13 different subunits. Subunits NuoB, CD, E, F, and G constitute the peripheral sector of the complex.

It localises to the cell inner membrane. The catalysed reaction is a quinone + NADH + 5 H(+)(in) = a quinol + NAD(+) + 4 H(+)(out). Functionally, NDH-1 shuttles electrons from NADH, via FMN and iron-sulfur (Fe-S) centers, to quinones in the respiratory chain. The immediate electron acceptor for the enzyme in this species is believed to be ubiquinone. Couples the redox reaction to proton translocation (for every two electrons transferred, four hydrogen ions are translocated across the cytoplasmic membrane), and thus conserves the redox energy in a proton gradient. In Rhodopseudomonas palustris (strain TIE-1), this protein is NADH-quinone oxidoreductase subunit C/D.